The sequence spans 474 residues: Poly(A) polymerase catalytic subunit (474 aa).

Active-site residues include aspartate 193 and aspartate 195.

Belongs to the poxviridae poly(A) polymerase catalytic subunit family. Heterodimer of a large (catalytic) subunit and a small (regulatory) subunit.

The catalysed reaction is RNA(n) + ATP = RNA(n)-3'-adenine ribonucleotide + diphosphate. Polymerase that creates the 3'-poly(A) tail of mRNA's. This Bos taurus (Bovine) protein is Poly(A) polymerase catalytic subunit (PAPL).